We begin with the raw amino-acid sequence, 133 residues long: Large-conductance mechanosensitive channel (133 aa).

Transmembrane regions (helical) follow at residues 19–39 and 79–99; these read IDLAVGVVIGGAFGKIVTSLV and IQSVVDFIIISFSIFLFVKLI.

Belongs to the MscL family. In terms of assembly, homopentamer.

The protein resides in the cell membrane. In terms of biological role, channel that opens in response to stretch forces in the membrane lipid bilayer. May participate in the regulation of osmotic pressure changes within the cell. This Clostridium tetani (strain Massachusetts / E88) protein is Large-conductance mechanosensitive channel.